A 225-amino-acid polypeptide reads, in one-letter code: MESVVVKISGSLVHPPRLDYLTRLRDVLWGLVDGGFRVAVVVGGGGLARSYIDVLRRAGVSEALLDEMGIESSRLNASLLAKLLYPRSQPYPLASLREVLEVFMTGLIPVSGGFQPGQSTNAVAAVIAEALGARTLLNCLKGVEGVYSDEPSTPGARLLRRLTYRQLEDILVKVSSQRAGSYTLWDMVALSVARRSGLRIVFFDCSDPANIWGALKGEKGSIVEG.

ATP is bound at residue 7–11 (KISGS). Residue G44 coordinates UMP. Residues G45 and R49 each contribute to the ATP site. UMP-binding positions include D66 and 114–120 (FQPGQST). Positions 147 and 150 each coordinate ATP.

The protein belongs to the UMP kinase family. Homohexamer.

The protein localises to the cytoplasm. The enzyme catalyses UMP + ATP = UDP + ADP. Its pathway is pyrimidine metabolism; CTP biosynthesis via de novo pathway; UDP from UMP (UMPK route): step 1/1. Inhibited by UTP. Catalyzes the reversible phosphorylation of UMP to UDP. The protein is Uridylate kinase of Aeropyrum pernix (strain ATCC 700893 / DSM 11879 / JCM 9820 / NBRC 100138 / K1).